We begin with the raw amino-acid sequence, 144 residues long: uncharacterized protein (144 aa).

This is an uncharacterized protein from Escherichia coli O157:H7.